Reading from the N-terminus, the 302-residue chain is Uricase (302 aa).

N-acetylserine is present on Ser2. Catalysis depends on charge relay system residues Lys11 and Thr58. Residues Thr58, Asp59, Phe160, Arg177, Val228, Gln229, and Asn255 each coordinate 5-hydroxyisourate. Thr58 serves as a coordination point for O2. 7 residues coordinate urate: Thr58, Asp59, Phe160, Arg177, Val228, Gln229, and Asn255. Asn255 is an O2 binding site. The active-site Charge relay system is the His257. The short motif at 300-302 (SKL) is the Microbody targeting signal element.

Belongs to the uricase family. In terms of assembly, homotetramer.

It is found in the peroxisome. The catalysed reaction is urate + O2 + H2O = 5-hydroxyisourate + H2O2. It participates in purine metabolism; urate degradation; (S)-allantoin from urate: step 1/3. Its activity is regulated as follows. 8-Azaxanthine is one of the most potent competitive inhibitors of uricase activity. Hypoxanthine has only a small inhibitor effect, and caffeine has no effect at all. Azide not only competes with dioxygen but also competes with the substrate for its enzymatic site. Functionally, urate oxidase is a cofactorless enzyme involved in the metabolism of purines. Catalyzes, in the presence of molecular oxygen, the hydroxylation of uric acid to metastable 5-hydroxyisourate (5-HIU) which is further degraded to allantoin. The protein is Uricase of Aspergillus flavus.